Here is a 793-residue protein sequence, read N- to C-terminus: Cation channel sperm-associated auxiliary subunit delta (793 aa).

The signal sequence occupies residues 1-20; it reads MLMLMLVAAVTMWLRPLVTA. The Extracellular segment spans residues 21–725; the sequence is QPLCRARTVR…AFPVQLVSAG (705 aa). Intrachain disulfides connect Cys24/Cys370, Cys60/Cys146, Cys145/Cys153, Cys388/Cys497, Cys511/Cys703, Cys526/Cys573, and Cys625/Cys653. Asn128 is a glycosylation site (N-linked (GlcNAc...) asparagine). N-linked (GlcNAc...) asparagine glycans are attached at residues Asn231, Asn241, Asn473, Asn539, and Asn631. A helical membrane pass occupies residues 726-747; sequence VVMVLLISSILGSVWLAYMIPR. The Cytoplasmic portion of the chain corresponds to 748–793; the sequence is LLRTARGRRMTSFVAQLYGRCKTVCQFRASATARTGSKPMGRHRSS.

This sequence belongs to the CATSPERD family. As to quaternary structure, component of the CatSper complex or CatSpermasome composed of the core pore-forming members CATSPER1, CATSPER2, CATSPER3 and CATSPER4 as well as auxiliary members CATSPERB, CATSPERG, CATSPERD, CATSPERE, CATSPERZ, C2CD6/CATSPERT, TMEM249, TMEM262 and EFCAB9. HSPA1 may be an additional auxiliary complex member. The core complex members CATSPER1, CATSPER2, CATSPER3 and CATSPER4 form a heterotetrameric channel. The auxiliary CATSPERB, CATSPERG, CATSPERD and CATSPERE subunits form a pavilion-like structure over the pore which stabilizes the complex through interactions with CATSPER4, CATSPER3, CATSPER1 and CATSPER2 respectively. TMEM262/CATSPERH interacts with CATSPERB, further stabilizing the complex. C2CD6/CATSPERT interacts at least with CATSPERD and is required for targeting the CatSper complex in the flagellar membrane.

It is found in the cell projection. The protein resides in the cilium. The protein localises to the flagellum membrane. Functionally, auxiliary component of the CatSper complex, a complex involved in sperm cell hyperactivation. Sperm cell hyperactivation is needed for sperm motility which is essential late in the preparation of sperm for fertilization. Required for CATSPER1 stability before intraflagellar transport and/or incorporation of the CatSper complex channel into the flagellar membrane. The polypeptide is Cation channel sperm-associated auxiliary subunit delta (Macaca fascicularis (Crab-eating macaque)).